Reading from the N-terminus, the 479-residue chain is Ribulose bisphosphate carboxylase large chain (479 aa).

Residues 1-2 (MS) constitute a propeptide that is removed on maturation. Substrate-binding residues include N123 and T173. K175 functions as the Proton acceptor in the catalytic mechanism. K177 contacts substrate. Residues K201, D203, and E204 each contribute to the Mg(2+) site. At K201 the chain carries N6-carboxylysine. S208 bears the Phosphoserine mark. The active-site Proton acceptor is the H294. Substrate contacts are provided by R295 and H327. A Phosphothreonine modification is found at T330. S379 contacts substrate.

The protein belongs to the RuBisCO large chain family. Type I subfamily. In terms of assembly, heterohexadecamer of 8 large chains and 8 small chains; disulfide-linked. The disulfide link is formed within the large subunit homodimers. It depends on Mg(2+) as a cofactor. In terms of processing, the disulfide bond which can form in the large chain dimeric partners within the hexadecamer appears to be associated with oxidative stress and protein turnover.

The protein resides in the plastid. It localises to the chloroplast. It catalyses the reaction 2 (2R)-3-phosphoglycerate + 2 H(+) = D-ribulose 1,5-bisphosphate + CO2 + H2O. It carries out the reaction D-ribulose 1,5-bisphosphate + O2 = 2-phosphoglycolate + (2R)-3-phosphoglycerate + 2 H(+). RuBisCO catalyzes two reactions: the carboxylation of D-ribulose 1,5-bisphosphate, the primary event in carbon dioxide fixation, as well as the oxidative fragmentation of the pentose substrate in the photorespiration process. Both reactions occur simultaneously and in competition at the same active site. The protein is Ribulose bisphosphate carboxylase large chain of Crucihimalaya wallichii (Rock-cress).